The primary structure comprises 440 residues: Protein disulfide-isomerase A6 (440 aa).

Residues 1 to 19 (MARLVLGLVSCTFFLAVSG) form the signal peptide. 2 Thioredoxin domains span residues 20-133 (LYSS…ALRQ) and 151-287 (QGRG…EDIA). C55 and C58 form a disulfide bridge. 3 positions are modified to phosphoserine: S129, S156, and S158. Residues 139-161 (LGGRSGGYSSGKQGRGDSSSKKD) form a disordered region. Basic and acidic residues predominate over residues 152–161 (GRGDSSSKKD). C190 and C193 are disulfide-bonded. Residues 399–440 (GGGSFPTITPREPWDGKDGELPVEDDIDLSDVELDDLEKDEL) form a disordered region. Acidic residues predominate over residues 419-440 (LPVEDDIDLSDVELDDLEKDEL). S428 bears the Phosphoserine mark. A Prevents secretion from ER motif is present at residues 437–440 (KDEL).

Belongs to the protein disulfide isomerase family. As to quaternary structure, part of a large chaperone multiprotein complex comprising DNAJB11, HSP90B1, HSPA5, HYOU, PDIA2, PDIA4, PDIA6, PPIB, SDF2L1, UGGT1 and very small amounts of ERP29, but not, or at very low levels, CALR nor CANX. Interacts with MICA on the surface of tumor cells, leading to MICA disulfide bond reduction which is required for its release from tumor cells. Interacts with ITGB3 following platelet stimulation. Interacts with ERN1; the interaction is direct. Interacts with EIF2AK3.

It localises to the endoplasmic reticulum lumen. The protein resides in the cell membrane. The protein localises to the melanosome. The enzyme catalyses Catalyzes the rearrangement of -S-S- bonds in proteins.. Functionally, may function as a chaperone that inhibits aggregation of misfolded proteins. Negatively regulates the unfolded protein response (UPR) through binding to UPR sensors such as ERN1, which in turn inactivates ERN1 signaling. May also regulate the UPR via the EIF2AK3 UPR sensor. Plays a role in platelet aggregation and activation by agonists such as convulxin, collagen and thrombin. The polypeptide is Protein disulfide-isomerase A6 (Pdia6) (Mus musculus (Mouse)).